A 206-amino-acid polypeptide reads, in one-letter code: Ribosomal RNA small subunit methyltransferase G (206 aa).

Residues G74, L79, 125 to 126, and R140 contribute to the S-adenosyl-L-methionine site; that span reads VE.

Belongs to the methyltransferase superfamily. RNA methyltransferase RsmG family.

The protein resides in the cytoplasm. The enzyme catalyses guanosine(527) in 16S rRNA + S-adenosyl-L-methionine = N(7)-methylguanosine(527) in 16S rRNA + S-adenosyl-L-homocysteine. Specifically methylates the N7 position of guanine in position 527 of 16S rRNA. In Shewanella sp. (strain ANA-3), this protein is Ribosomal RNA small subunit methyltransferase G.